A 586-amino-acid polypeptide reads, in one-letter code: MRKTKIVCTIGPASESEEMLEKLMKAGMNVARLNFSHGSHEEHKARIDTIRKVADRLGKTIGILLDTKGPEIRTHDMKDGLIMLEKGKEVIVSMSQVEGTPEKFSVTYEDLINDVQVGSYILLDDGLVELQVKDIDKTKGEVKCDILNTGELKNKKGVNLPGVKVNLPGITDKDADDILFGIKEDVDYIAASFVRRPSDVLDIREILERENNHNITIFPKIENQEGIDNIEEILEVSDGLMVARGDMGVEIPPESVPIVQKDLIRKCNKLGKPVITATQMLDSMQRNPRATRAEASDVANAIYDGTDAVMLSGETAAGLYPEEAVKTMRNIAVSAEAAQDYKKLLSDRTKLVETSLVNAIGVSVAHTALNLNVKAIVAATESGSTAVTISKYRPHSDIIAVTPSEHTARQLALVWGAYPVIKKGRKTTDDLLNNAVATAVETGRVTNGDLIIITAGVPTGEKGTTNMMKLHLVGDEIAKGQGVGRGSVVGKTVVANSASDLEGVDLSESVIVTNSVDETLVPYIEQAVGLITEENGITSPSAIIGLEKSIPTIIGVENATKELKDGILVTVDAAQGKIFEGYANVL.

Residue Arg32 participates in substrate binding. K(+)-binding residues include Asn34, Ser36, Asp66, and Thr67. 34–37 contacts ATP; sequence NFSH. ATP-binding residues include Arg73 and Lys156. A Mg(2+)-binding site is contributed by Glu222. 3 residues coordinate substrate: Gly245, Asp246, and Thr278. Asp246 is a Mg(2+) binding site.

Belongs to the pyruvate kinase family. The protein in the C-terminal section; belongs to the PEP-utilizing enzyme family. The cofactor is Mg(2+). K(+) is required as a cofactor.

The enzyme catalyses pyruvate + ATP = phosphoenolpyruvate + ADP + H(+). It participates in carbohydrate degradation; glycolysis; pyruvate from D-glyceraldehyde 3-phosphate: step 5/5. This Staphylococcus haemolyticus (strain JCSC1435) protein is Pyruvate kinase (pyk).